We begin with the raw amino-acid sequence, 683 residues long: Leucine-rich repeat protein soc-2 homolog (683 aa).

Residues 1 to 19 show a composition bias toward low complexity; the sequence is MNLCSSGATASTTSLSSTG. Disordered stretches follow at residues 1 to 54 and 74 to 150; these read MNLC…SDVS and GTDE…IQAD. The segment covering 26–49 has biased composition (gly residues); that stretch reads GVPGGGAEGGGGGGGSGNSGGGGK. The segment covering 74–86 has biased composition (low complexity); the sequence is GTDELSNANSPAN. Residues 99 to 117 show a composition bias toward polar residues; that stretch reads QQPTGSNGHSHLHNENNAN. LRR repeat units lie at residues 164-185, 187-208, 210-231, 233-254, 256-277, 279-300, 302-323, 325-346, 348-370, 371-392, 395-416, 419-440, 443-464, 466-487, 489-510, 512-533, 535-556, 558-579, 581-603, and 605-626; these read GIKR…VKEC, HLTE…IGCL, SLRN…LQNC, QLKV…IYRL, SLTT…LRQL, NLTM…IGAL, NLTT…IGNC, NLSA…IGNL, SLVR…KNCK, SMDE…MLAS, GLTT…GPAQ, NVYS…IFSR, GLTK…IGTW, NMVE…IMNL, NLEI…IGNL, RLRI…IGLL, ELQR…IGHL, NLTH…IGSL, SLEN…LALC, and NLKY…IQAG. Residues 661 to 671 are compositionally biased toward gly residues; it reads AGGNGGGGAAA. The disordered stretch occupies residues 661–683; it reads AGGNGGGGAAAAGGSASRSSDRR. Positions 672-683 are enriched in low complexity; sequence AGGSASRSSDRR.

It belongs to the SHOC2 family.

Functionally, acts as a Ras effector and participates in MAPK pathway activation. Probably acts as a regulatory subunit of protein phosphatase that specifically dephosphorylates Raf kinase and stimulate Raf activity at specialized signaling complexes upon Ras activation. The chain is Leucine-rich repeat protein soc-2 homolog (Sur-8) from Drosophila sechellia (Fruit fly).